Reading from the N-terminus, the 330-residue chain is Succinoglycan biosynthesis protein ExoA (330 aa).

Helical transmembrane passes span 116 to 136 (ALATGADSVVVAMQTVGFSTF), 260 to 280 (IAFGALLAIVNWMAVVPVGVW), and 299 to 319 (YGPLAAVAAMVMHLAWSAGFW).

It belongs to the glycosyltransferase 2 family.

Its subcellular location is the cell membrane. It functions in the pathway glycan metabolism; exopolysaccharide biosynthesis. In terms of biological role, glycosyltransferase required for the synthesis of succinoglycan (EPS I). Needed for the addition of the second sugar (glucose). Catalyzes the formation of a beta-1,3 linkage with the galactose lipid carrier. In Rhizobium meliloti (strain 1021) (Ensifer meliloti), this protein is Succinoglycan biosynthesis protein ExoA (exoA).